The sequence spans 299 residues: Phosphatidylserine decarboxylase proenzyme (299 aa).

Active-site charge relay system; for autoendoproteolytic cleavage activity residues include D115, H171, and S258. The Schiff-base intermediate with substrate; via pyruvic acid; for decarboxylase activity role is filled by S258. S258 carries the post-translational modification Pyruvic acid (Ser); by autocatalysis.

The protein belongs to the phosphatidylserine decarboxylase family. PSD-B subfamily. Prokaryotic type II sub-subfamily. In terms of assembly, heterodimer of a large membrane-associated beta subunit and a small pyruvoyl-containing alpha subunit. It depends on pyruvate as a cofactor. Is synthesized initially as an inactive proenzyme. Formation of the active enzyme involves a self-maturation process in which the active site pyruvoyl group is generated from an internal serine residue via an autocatalytic post-translational modification. Two non-identical subunits are generated from the proenzyme in this reaction, and the pyruvate is formed at the N-terminus of the alpha chain, which is derived from the carboxyl end of the proenzyme. The autoendoproteolytic cleavage occurs by a canonical serine protease mechanism, in which the side chain hydroxyl group of the serine supplies its oxygen atom to form the C-terminus of the beta chain, while the remainder of the serine residue undergoes an oxidative deamination to produce ammonia and the pyruvoyl prosthetic group on the alpha chain. During this reaction, the Ser that is part of the protease active site of the proenzyme becomes the pyruvoyl prosthetic group, which constitutes an essential element of the active site of the mature decarboxylase.

The protein resides in the cell membrane. It catalyses the reaction a 1,2-diacyl-sn-glycero-3-phospho-L-serine + H(+) = a 1,2-diacyl-sn-glycero-3-phosphoethanolamine + CO2. Its pathway is phospholipid metabolism; phosphatidylethanolamine biosynthesis; phosphatidylethanolamine from CDP-diacylglycerol: step 2/2. Functionally, catalyzes the formation of phosphatidylethanolamine (PtdEtn) from phosphatidylserine (PtdSer). This chain is Phosphatidylserine decarboxylase proenzyme, found in Chlamydia caviae (strain ATCC VR-813 / DSM 19441 / 03DC25 / GPIC) (Chlamydophila caviae).